Reading from the N-terminus, the 330-residue chain is DNA-directed RNA polymerase subunit alpha (330 aa).

Residues 1–236 (MQGSVTEFLK…EQLDAFVDLR (236 aa)) form an alpha N-terminal domain (alpha-NTD) region. Residues 250–330 (FDPILLRPVD…NWPPASIAED (81 aa)) are alpha C-terminal domain (alpha-CTD).

Belongs to the RNA polymerase alpha chain family. As to quaternary structure, homodimer. The RNAP catalytic core consists of 2 alpha, 1 beta, 1 beta' and 1 omega subunit. When a sigma factor is associated with the core the holoenzyme is formed, which can initiate transcription.

The catalysed reaction is RNA(n) + a ribonucleoside 5'-triphosphate = RNA(n+1) + diphosphate. Its function is as follows. DNA-dependent RNA polymerase catalyzes the transcription of DNA into RNA using the four ribonucleoside triphosphates as substrates. This chain is DNA-directed RNA polymerase subunit alpha, found in Vibrio cholerae serotype O1 (strain ATCC 39315 / El Tor Inaba N16961).